A 315-amino-acid polypeptide reads, in one-letter code: Protein-L-isoaspartate O-methyltransferase (315 aa).

Disordered stretches follow at residues Met-1–Ala-47 and Arg-59–Lys-89. Positions Glu-14–Ala-34 are enriched in basic and acidic residues. Composition is skewed to low complexity over residues Ala-35–Ala-47 and Arg-59–Ala-81. The active site involves Ser-162.

The protein belongs to the methyltransferase superfamily. L-isoaspartyl/D-aspartyl protein methyltransferase family.

It localises to the cytoplasm. It catalyses the reaction [protein]-L-isoaspartate + S-adenosyl-L-methionine = [protein]-L-isoaspartate alpha-methyl ester + S-adenosyl-L-homocysteine. Its function is as follows. Catalyzes the methyl esterification of L-isoaspartyl residues in peptides and proteins that result from spontaneous decomposition of normal L-aspartyl and L-asparaginyl residues. It plays a role in the repair and/or degradation of damaged proteins. This Burkholderia ambifaria (strain MC40-6) protein is Protein-L-isoaspartate O-methyltransferase.